We begin with the raw amino-acid sequence, 600 residues long: ATP-dependent lipid A-core flippase (600 aa).

6 helical membrane passes run 28 to 48, 80 to 100, 159 to 179, 182 to 202, 267 to 287, and 295 to 315; these read TLSI…IAFI, VMLM…VANF, ALIS…LMFF, WKLS…ISIV, VSQP…LYAA, and ELTA…LQPI. The ABC transmembrane type-1 domain occupies 29–327; sequence LSILGLIVYG…LTRVNAEFQR (299 aa). Positions 359-596 constitute an ABC transporter domain; that stretch reads LRFDNVSFSY…KGAYAGLYQM (238 aa). Residue 393–400 participates in ATP binding; the sequence is GRSGSGKS.

The protein belongs to the ABC transporter superfamily. Lipid exporter (TC 3.A.1.106) family. Homodimer.

The protein resides in the cell inner membrane. The enzyme catalyses ATP + H2O + lipid A-core oligosaccharideSide 1 = ADP + phosphate + lipid A-core oligosaccharideSide 2.. Its function is as follows. Involved in lipopolysaccharide (LPS) biosynthesis. Translocates lipid A-core from the inner to the outer leaflet of the inner membrane. Transmembrane domains (TMD) form a pore in the inner membrane and the ATP-binding domain (NBD) is responsible for energy generation. In Shewanella denitrificans (strain OS217 / ATCC BAA-1090 / DSM 15013), this protein is ATP-dependent lipid A-core flippase.